We begin with the raw amino-acid sequence, 402 residues long: Protein lag-2 (402 aa).

The N-terminal stretch at Met-1–Leu-15 is a signal peptide. Residues Gln-16 to Ile-279 are Extracellular-facing. Asn-72 and Asn-105 each carry an N-linked (GlcNAc...) asparagine glycan. A DSL domain is found at Val-122–Cys-166. 9 cysteine pairs are disulfide-bonded: Cys-124-Cys-133, Cys-137-Cys-149, Cys-157-Cys-166, Cys-175-Cys-183, Cys-177-Cys-204, Cys-206-Cys-215, Cys-233-Cys-245, Cys-239-Cys-254, and Cys-256-Cys-265. 2 EGF-like domains span residues Asp-171 to Glu-216 and Arg-229 to Glu-266. The N-linked (GlcNAc...) asparagine glycan is linked to Asn-194. Residues Thr-280 to Cys-306 form a helical membrane-spanning segment. The Cytoplasmic portion of the chain corresponds to Phe-307 to Val-402.

As to quaternary structure, may interact with lin-12 / Notch receptor. Expressed in the gonad distal tip cell (DTC) of hermaphrodites.

The protein localises to the cell membrane. Its function is as follows. Probable ligand for lin-12/Notch and glp-1/Notch receptors and involved in the mediation of Notch signaling. Involved in the lin-12/Notch pathway signaling of cell fate in vulval precursor cells (VPCs) and in the postembryonic mesodermal lineage (M lineage), acting redundantly with dsl-1 and apx-1. Functions in uterine cells to promote basement membrane mobility during tissue remodeling. Required for oocyte growth control, acting redundantly with apx-1, perhaps signaling via the glp-1/Notch pathway. Plays a role in Notch-dependent induction of left-right asymmetry in interneurons and motoneurons. Involved in maintaining the developmentally arrested larval state known as dauer, probably signaling in the glp-1/Notch pathway. Required for normal sleep bout quantity and arousal thresholds during the transition from the last larval stage to adulthood in well-fed animals. The polypeptide is Protein lag-2 (Caenorhabditis elegans).